The sequence spans 707 residues: ATP-dependent zinc metalloprotease FtsH (707 aa).

Over 1-25 the chain is Cytoplasmic; it reads MSELDNKKDKSKDSNKKPKKPGAFS. Residues 26-46 traverse the membrane as a helical segment; sequence IGNIIIFVIVALLLIWVVFAF. Residues 47-128 lie on the Extracellular side of the membrane; sequence LPNNPGTNKS…GTTFTGLELA (82 aa). Residues 129–149 form a helical membrane-spanning segment; the sequence is TLAIANTSASGIGTLNFSGLV. The Cytoplasmic segment spans residues 150–707; that stretch reads TPTNQALAIL…IKTDESLDIK (558 aa). 246 to 253 contributes to the ATP binding site; that stretch reads GPPGTGKT. Zn(2+) is bound at residue H468. The active site involves E469. Zn(2+)-binding residues include H472 and D546.

The protein in the central section; belongs to the AAA ATPase family. It in the C-terminal section; belongs to the peptidase M41 family. In terms of assembly, homohexamer. Zn(2+) serves as cofactor.

Its subcellular location is the cell membrane. Functionally, acts as a processive, ATP-dependent zinc metallopeptidase for both cytoplasmic and membrane proteins. Plays a role in the quality control of integral membrane proteins. The sequence is that of ATP-dependent zinc metalloprotease FtsH from Mycoplasma mobile (strain ATCC 43663 / 163K / NCTC 11711) (Mesomycoplasma mobile).